The following is a 260-amino-acid chain: Tryptophan synthase alpha chain (260 aa).

Catalysis depends on proton acceptor residues Glu52 and Asp63.

This sequence belongs to the TrpA family. In terms of assembly, tetramer of two alpha and two beta chains.

It carries out the reaction (1S,2R)-1-C-(indol-3-yl)glycerol 3-phosphate + L-serine = D-glyceraldehyde 3-phosphate + L-tryptophan + H2O. It participates in amino-acid biosynthesis; L-tryptophan biosynthesis; L-tryptophan from chorismate: step 5/5. In terms of biological role, the alpha subunit is responsible for the aldol cleavage of indoleglycerol phosphate to indole and glyceraldehyde 3-phosphate. In Streptococcus mutans serotype c (strain ATCC 700610 / UA159), this protein is Tryptophan synthase alpha chain.